We begin with the raw amino-acid sequence, 408 residues long: Phosphopentomutase (408 aa).

Asp10, Asp307, His312, Asp348, His349, and His360 together coordinate Mn(2+).

It belongs to the phosphopentomutase family. Mn(2+) is required as a cofactor.

The protein localises to the cytoplasm. It catalyses the reaction 2-deoxy-alpha-D-ribose 1-phosphate = 2-deoxy-D-ribose 5-phosphate. The catalysed reaction is alpha-D-ribose 1-phosphate = D-ribose 5-phosphate. It functions in the pathway carbohydrate degradation; 2-deoxy-D-ribose 1-phosphate degradation; D-glyceraldehyde 3-phosphate and acetaldehyde from 2-deoxy-alpha-D-ribose 1-phosphate: step 1/2. Its function is as follows. Isomerase that catalyzes the conversion of deoxy-ribose 1-phosphate (dRib-1-P) and ribose 1-phosphate (Rib-1-P) to deoxy-ribose 5-phosphate (dRib-5-P) and ribose 5-phosphate (Rib-5-P), respectively. The protein is Phosphopentomutase of Proteus mirabilis (strain HI4320).